The primary structure comprises 656 residues: MSARAHPVDDDGEISPVERSSPRQANTPYVHKVEVPPKQNLFNEFMYTFKETFFHDDPLRHFKDQSKSKKLMLGIQSVFPVIEWGRKYNLKLFRGDLIAGLTIASLCIPQDIGYAKLASLDPKYGLYSSFVPPLVYACMGSSKDIAIGPVAVVSLLLGTLLRAEIDPNTNPNEYLRLAFTSTFFAGVTQAALGFFRLGFLIDFLSHAAVVGFMGGAAITIALQQLKGFLGINKFTKKTDIIAVLSSVISSAHHGWNWQTILISASFLIFLLISKFIGKRNKKLFWIPAIAPLVSVIISTFFVYITRADKKGVQIVKHLDKGLNPSSLRLIYFSGDYLLKGFRIGVVSGMVALTEAVAIGRTFAAMKDYQIDGNKEMVALGAMNVIGSMTSCYVSTGSFSRSAVNFMAGCQTAVSNIIMSIVVLLTLLFLTPLFKYTPNAILAAIIINAVIPLVDVNATILIFKIDKLDFVACMGAFFGVIFVSVEIGLLIAVGISFAKILLQVTRPRTAILGKIPGTSVYRNINQYPEATRIPGVLTIRVDSAIYFSNSNYVRERIQRWLTDEEEMVEAARLPRIQFLIIEMSPVTDIDTSGIHALEDLYKSLQKRDIQLVLANPGPPVINKLHVSHFADLIGHDKIFLTVAEAVDSCSPKLSDEV.

Residues 1–30 (MSARAHPVDDDGEISPVERSSPRQANTPYV) form a disordered region. The Cytoplasmic portion of the chain corresponds to 1–94 (MSARAHPVDD…GRKYNLKLFR (94 aa)). A helical transmembrane segment spans residues 95-115 (GDLIAGLTIASLCIPQDIGYA). Over 116–119 (KLAS) the chain is Extracellular. Residues 120 to 140 (LDPKYGLYSSFVPPLVYACMG) traverse the membrane as a helical segment. Over 141-144 (SSKD) the chain is Cytoplasmic. The helical transmembrane segment at 145–165 (IAIGPVAVVSLLLGTLLRAEI) threads the bilayer. At 166–176 (DPNTNPNEYLR) the chain is on the extracellular side. The next 2 membrane-spanning stretches (helical) occupy residues 177–197 (LAFT…FFRL) and 198–218 (GFLI…GAAI). The Extracellular portion of the chain corresponds to 219 to 256 (TIALQQLKGFLGINKFTKKTDIIAVLSSVISSAHHGWN). The helical transmembrane segment at 257–277 (WQTILISASFLIFLLISKFIG) threads the bilayer. Residues 278–283 (KRNKKL) are Cytoplasmic-facing. The helical transmembrane segment at 284–304 (FWIPAIAPLVSVIISTFFVYI) threads the bilayer. The Extracellular segment spans residues 305 to 342 (TRADKKGVQIVKHLDKGLNPSSLRLIYFSGDYLLKGFR). The helical transmembrane segment at 343–363 (IGVVSGMVALTEAVAIGRTFA) threads the bilayer. The Cytoplasmic portion of the chain corresponds to 364-375 (AMKDYQIDGNKE). A helical membrane pass occupies residues 376-396 (MVALGAMNVIGSMTSCYVSTG). Residues 397–412 (SFSRSAVNFMAGCQTA) lie on the Extracellular side of the membrane. The chain crosses the membrane as a helical span at residues 413–433 (VSNIIMSIVVLLTLLFLTPLF). The Cytoplasmic segment spans residues 434–441 (KYTPNAIL). The chain crosses the membrane as a helical span at residues 442-462 (AAIIINAVIPLVDVNATILIF). Over 463–473 (KIDKLDFVACM) the chain is Extracellular. The helical transmembrane segment at 474 to 494 (GAFFGVIFVSVEIGLLIAVGI) threads the bilayer. Over 495–656 (SFAKILLQVT…SCSPKLSDEV (162 aa)) the chain is Cytoplasmic. The 124-residue stretch at 525–648 (QYPEATRIPG…LTVAEAVDSC (124 aa)) folds into the STAS domain.

The protein belongs to the SLC26A/SulP transporter (TC 2.A.53) family. In terms of tissue distribution, expressed in the phloem of cotyledons, hypocotyls and roots.

Its subcellular location is the membrane. High-affinity H(+)/sulfate cotransporter that mediates the loading of sulfate into the sieve tube. Plays a central role in the regulation of sulfate assimilation. The chain is Sulfate transporter 1.3 (SULTR1;3) from Arabidopsis thaliana (Mouse-ear cress).